Reading from the N-terminus, the 389-residue chain is Acetyl-CoA:oxalate CoA-transferase (389 aa).

Residue H237 is part of the active site.

In terms of assembly, homodimer.

The catalysed reaction is oxalate + acetyl-CoA = oxalyl-CoA + acetate. In terms of biological role, involved in the catabolism of oxalate and in the adapatation to low pH. ACOCT serves to prime the oxalate-induced acid tolerance response (ATR) cycle by producing substrate for oxalyl-CoA decarboxylase (OXC) and formyl-coenzyme A transferase (FCOCT). Catalyzes the reversible conversion of acetyl-CoA and oxalate to oxalyl-CoA and acetate. It can also use formyl-CoA and oxalate to produce oxalyl-CoA and formate with significantly reduced specific activity. This is Acetyl-CoA:oxalate CoA-transferase (uctC) from Acetobacter aceti.